Reading from the N-terminus, the 525-residue chain is GMP synthase [glutamine-hydrolyzing] (525 aa).

One can recognise a Glutamine amidotransferase type-1 domain in the interval 9–207; that stretch reads RILILDFGSQ…VRDICQCEAL (199 aa). The active-site Nucleophile is Cys-86. Catalysis depends on residues His-181 and Glu-183. A GMPS ATP-PPase domain is found at 208-400; sequence WTPAKIIDDA…LGLPYDMLYR (193 aa). 235–241 is a binding site for ATP; that stretch reads SGGVDSS.

Homodimer.

The catalysed reaction is XMP + L-glutamine + ATP + H2O = GMP + L-glutamate + AMP + diphosphate + 2 H(+). Its pathway is purine metabolism; GMP biosynthesis; GMP from XMP (L-Gln route): step 1/1. In terms of biological role, catalyzes the synthesis of GMP from XMP. The polypeptide is GMP synthase [glutamine-hydrolyzing] (Shigella boydii serotype 4 (strain Sb227)).